Consider the following 182-residue polypeptide: UPF0301 protein NMCC_1249 (182 aa).

This sequence belongs to the UPF0301 (AlgH) family.

The protein is UPF0301 protein NMCC_1249 of Neisseria meningitidis serogroup C (strain 053442).